The primary structure comprises 499 residues: MAHDLLFRLFPLLALGVPLQSNRLGPTSRLRYSRFLDPSNVIFLRWDFDLEAEIISFELQVRTAGWVGFGVTNRYTNVGSDLVVGGVLPNGNVYFSDQHLVEEDTLKEDGSQDAELLGLTEDAVYTTMHFSRPFRSCDPHDLDITSNTVRVLAAYGLDDTLKLYRERTFVKSIFLLQVVHPDDLDVPEDTIIHDLEITNFLIPEDDTTYACTFLPLPIVSEKHHIYKFEPKLVYHNETTVHHILVYACGNASVLPTGISDCYGADPAFSLCSQVIVGSAVGGTSYQFPDDVGVSIGTPLDPQWILEIHYSNFNNLPGVYDSSGIRVYYTSQLCKYDTDVLQLGFFTFPIHFIPPGAESFMSYGLCRTEKFEEMNGAPMPDIQVYGYLLHTHLAGRALQAVQYRNGTQLRKICKDDSYDFNLQETRDLPSRVEIKPGDELLVECHYQTLDRDSMTFGGPSTINEMCLIFLFYYPQNNISSCMGYPDIIYVAHELGEEASE.

Positions 1–16 are cleaved as a signal peptide; the sequence is MAHDLLFRLFPLLALG. The DOMON domain maps to 40–156; it reads NVIFLRWDFD…NTVRVLAAYG (117 aa). Tyr209 is an active-site residue. 2 disulfides stabilise this stretch: Cys211–Cys261 and Cys248–Cys271. An N-linked (GlcNAc...) asparagine glycan is attached at Asn236. Cu cation is bound by residues His241 and His242. N-linked (GlcNAc...) asparagine glycosylation is present at Asn250. Cu cation is bound by residues His308, His389, and His391. 2 cysteine pairs are disulfide-bonded: Cys365–Cys480 and Cys443–Cys465. His389 is an active-site residue. Asn404 is a glycosylation site (N-linked (GlcNAc...) asparagine). Residue Met464 participates in Cu cation binding. A glycan (N-linked (GlcNAc...) asparagine) is linked at Asn476.

It belongs to the copper type II ascorbate-dependent monooxygenase family. Cu(2+) is required as a cofactor.

The sequence is that of Putative DBH-like monooxygenase protein 2 (MOXD2P) from Homo sapiens (Human).